The following is a 343-amino-acid chain: UDP-3-O-acylglucosamine N-acyltransferase (343 aa).

The Proton acceptor role is filled by histidine 237.

It belongs to the transferase hexapeptide repeat family. LpxD subfamily. Homotrimer.

The catalysed reaction is a UDP-3-O-[(3R)-3-hydroxyacyl]-alpha-D-glucosamine + a (3R)-hydroxyacyl-[ACP] = a UDP-2-N,3-O-bis[(3R)-3-hydroxyacyl]-alpha-D-glucosamine + holo-[ACP] + H(+). The protein operates within bacterial outer membrane biogenesis; LPS lipid A biosynthesis. In terms of biological role, catalyzes the N-acylation of UDP-3-O-acylglucosamine using 3-hydroxyacyl-ACP as the acyl donor. Is involved in the biosynthesis of lipid A, a phosphorylated glycolipid that anchors the lipopolysaccharide to the outer membrane of the cell. The protein is UDP-3-O-acylglucosamine N-acyltransferase of Synechococcus sp. (strain JA-3-3Ab) (Cyanobacteria bacterium Yellowstone A-Prime).